The primary structure comprises 406 residues: Phosphopentomutase (406 aa).

D10, D305, H310, D346, H347, and H358 together coordinate Mn(2+).

This sequence belongs to the phosphopentomutase family. Requires Mn(2+) as cofactor.

It is found in the cytoplasm. The catalysed reaction is 2-deoxy-alpha-D-ribose 1-phosphate = 2-deoxy-D-ribose 5-phosphate. It carries out the reaction alpha-D-ribose 1-phosphate = D-ribose 5-phosphate. It functions in the pathway carbohydrate degradation; 2-deoxy-D-ribose 1-phosphate degradation; D-glyceraldehyde 3-phosphate and acetaldehyde from 2-deoxy-alpha-D-ribose 1-phosphate: step 1/2. Isomerase that catalyzes the conversion of deoxy-ribose 1-phosphate (dRib-1-P) and ribose 1-phosphate (Rib-1-P) to deoxy-ribose 5-phosphate (dRib-5-P) and ribose 5-phosphate (Rib-5-P), respectively. The chain is Phosphopentomutase from Methylorubrum extorquens (strain PA1) (Methylobacterium extorquens).